The chain runs to 305 residues: Ribonuclease BN (305 aa).

Residues His-64, His-66, Asp-68, His-69, His-141, Asp-212, and His-270 each coordinate Zn(2+). The active-site Proton acceptor is the Asp-68.

This sequence belongs to the RNase Z family. RNase BN subfamily. In terms of assembly, homodimer. Zn(2+) serves as cofactor.

Its function is as follows. Zinc phosphodiesterase, which has both exoribonuclease and endoribonuclease activities. This chain is Ribonuclease BN, found in Escherichia coli O81 (strain ED1a).